A 226-amino-acid chain; its full sequence is Putative N-acetylmannosamine-6-phosphate 2-epimerase (226 aa).

This sequence belongs to the NanE family.

It catalyses the reaction an N-acyl-D-glucosamine 6-phosphate = an N-acyl-D-mannosamine 6-phosphate. It functions in the pathway amino-sugar metabolism; N-acetylneuraminate degradation; D-fructose 6-phosphate from N-acetylneuraminate: step 3/5. In terms of biological role, converts N-acetylmannosamine-6-phosphate (ManNAc-6-P) to N-acetylglucosamine-6-phosphate (GlcNAc-6-P). The polypeptide is Putative N-acetylmannosamine-6-phosphate 2-epimerase (Mycoplasma capricolum subsp. capricolum (strain California kid / ATCC 27343 / NCTC 10154)).